The sequence spans 228 residues: Cytidylate kinase (228 aa).

11–19 (GPAGTGKSS) is a binding site for ATP.

The protein belongs to the cytidylate kinase family. Type 1 subfamily.

It localises to the cytoplasm. The enzyme catalyses CMP + ATP = CDP + ADP. The catalysed reaction is dCMP + ATP = dCDP + ADP. This chain is Cytidylate kinase, found in Mycobacterium avium (strain 104).